A 166-amino-acid polypeptide reads, in one-letter code: Large ribosomal subunit protein uL10 (166 aa).

The protein belongs to the universal ribosomal protein uL10 family. Part of the ribosomal stalk of the 50S ribosomal subunit. The N-terminus interacts with L11 and the large rRNA to form the base of the stalk. The C-terminus forms an elongated spine to which L12 dimers bind in a sequential fashion forming a multimeric L10(L12)X complex.

Functionally, forms part of the ribosomal stalk, playing a central role in the interaction of the ribosome with GTP-bound translation factors. This is Large ribosomal subunit protein uL10 from Streptococcus pneumoniae serotype 19F (strain G54).